A 169-amino-acid polypeptide reads, in one-letter code: U3 small nucleolar ribonucleoprotein protein imp3 (169 aa).

Residues 109–166 form the S4 RNA-binding domain; that stretch reads RRLPVVMCRLKMCETVSTSVKYVEHGHVRVGPEVITDPAFFVTRNMEDFVTWVDSSKI.

The protein belongs to the universal ribosomal protein uS4 family. In terms of assembly, component of a heterotrimeric complex containing imp3, imp4 and mpp10.

It localises to the nucleus. The protein localises to the nucleolus. Its function is as follows. Component of the U3 small nucleolar ribonucleoprotein. Required for the early cleavages at sites A0, A1 and A2 during 18S ribosomal pre-RNA processing. The protein is U3 small nucleolar ribonucleoprotein protein imp3 (RBP) of Pneumocystis carinii.